Here is a 430-residue protein sequence, read N- to C-terminus: V-type ATP synthase beta chain 1 (430 aa).

Belongs to the ATPase alpha/beta chains family.

Its function is as follows. Produces ATP from ADP in the presence of a proton gradient across the membrane. The V-type beta chain is a regulatory subunit. The polypeptide is V-type ATP synthase beta chain 1 (atpB1) (Treponema pallidum (strain Nichols)).